We begin with the raw amino-acid sequence, 767 residues long: V-set and immunoglobulin domain-containing protein 10-like 2 (767 aa).

The signal sequence occupies residues 1-28 (MVGQRAQHSPVSLLLLIHLCLLHLRASG). Ig-like domains follow at residues 34-140 (PEAP…SHLT), 150-234 (PQVR…AFLD), and 242-324 (PVIT…TTVQ). Cystine bridges form between Cys56–Cys122, Cys169–Cys217, and Cys268–Cys308. N-linked (GlcNAc...) asparagine glycosylation is present at Asn376. 2 Ig-like domains span residues 399 to 499 (PALA…LQLE) and 501 to 593 (PQLD…VLLE). 2 disulfide bridges follow: Cys435-Cys481 and Cys522-Cys577. The 101-residue stretch at 599–699 (APPNVTISRL…EVKIPADPPF (101 aa)) folds into the Fibronectin type-III domain. N-linked (GlcNAc...) asparagine glycans are attached at residues Asn602 and Asn628. Residues 704–724 (AVLGAAGTGMVVATVASLLVF) traverse the membrane as a helical segment. A disordered region spans residues 735–754 (PRLETPTTTPGLDPAQETTD). The segment covering 739–754 (TPTTTPGLDPAQETTD) has biased composition (polar residues).

It is found in the membrane. The polypeptide is V-set and immunoglobulin domain-containing protein 10-like 2 (Homo sapiens (Human)).